The chain runs to 263 residues: TLC domain-containing protein 4 (263 aa).

4 helical membrane-spanning segments follow: residues 7-27, 53-73, 90-110, and 124-144; these read LLIS…YFVS, VVST…FLFD, VNIA…ILYW, and ASLY…IGNF. In terms of domain architecture, TLC spans 44–246; sequence KKKIEWNSRV…ISKGCIKVIS (203 aa). Lys165 bears the N6-acetyllysine mark. 2 consecutive transmembrane segments (helical) span residues 173–193 and 211–231; these read IVIN…ASML and LGVL…VMNV.

This sequence belongs to the TLCD4 family.

Its subcellular location is the membrane. In Homo sapiens (Human), this protein is TLC domain-containing protein 4.